The sequence spans 211 residues: LexA repressor (211 aa).

Positions 35 to 55 (RAEIANFFGFKSANAAEEHLK) form a DNA-binding region, H-T-H motif. Catalysis depends on for autocatalytic cleavage activity residues Ser-128 and Lys-165.

Belongs to the peptidase S24 family. Homodimer.

The enzyme catalyses Hydrolysis of Ala-|-Gly bond in repressor LexA.. Represses a number of genes involved in the response to DNA damage (SOS response), including recA and lexA. In the presence of single-stranded DNA, RecA interacts with LexA causing an autocatalytic cleavage which disrupts the DNA-binding part of LexA, leading to derepression of the SOS regulon and eventually DNA repair. The sequence is that of LexA repressor from Colwellia psychrerythraea (strain 34H / ATCC BAA-681) (Vibrio psychroerythus).